A 166-amino-acid polypeptide reads, in one-letter code: ATP synthase subunit b 1 (166 aa).

The helical transmembrane segment at 7–29 (FWTALAFVLFFVIFGRKLWVAIT) threads the bilayer.

The protein belongs to the ATPase B chain family. In terms of assembly, F-type ATPases have 2 components, F(1) - the catalytic core - and F(0) - the membrane proton channel. F(1) has five subunits: alpha(3), beta(3), gamma(1), delta(1), epsilon(1). F(0) has three main subunits: a(1), b(2) and c(10-14). The alpha and beta chains form an alternating ring which encloses part of the gamma chain. F(1) is attached to F(0) by a central stalk formed by the gamma and epsilon chains, while a peripheral stalk is formed by the delta and b chains.

Its subcellular location is the cell inner membrane. In terms of biological role, f(1)F(0) ATP synthase produces ATP from ADP in the presence of a proton or sodium gradient. F-type ATPases consist of two structural domains, F(1) containing the extramembraneous catalytic core and F(0) containing the membrane proton channel, linked together by a central stalk and a peripheral stalk. During catalysis, ATP synthesis in the catalytic domain of F(1) is coupled via a rotary mechanism of the central stalk subunits to proton translocation. Functionally, component of the F(0) channel, it forms part of the peripheral stalk, linking F(1) to F(0). The chain is ATP synthase subunit b 1 from Gluconobacter oxydans (strain 621H) (Gluconobacter suboxydans).